Here is a 300-residue protein sequence, read N- to C-terminus: ATP synthase gamma chain (300 aa).

This sequence belongs to the ATPase gamma chain family. F-type ATPases have 2 components, CF(1) - the catalytic core - and CF(0) - the membrane proton channel. CF(1) has five subunits: alpha(3), beta(3), gamma(1), delta(1), epsilon(1). CF(0) has three main subunits: a, b and c.

It is found in the cell membrane. Functionally, produces ATP from ADP in the presence of a proton gradient across the membrane. The gamma chain is believed to be important in regulating ATPase activity and the flow of protons through the CF(0) complex. The polypeptide is ATP synthase gamma chain (Enterococcus hirae (strain ATCC 9790 / DSM 20160 / JCM 8729 / LMG 6399 / NBRC 3181 / NCIMB 6459 / NCDO 1258 / NCTC 12367 / WDCM 00089 / R)).